Reading from the N-terminus, the 361-residue chain is Histidine biosynthesis bifunctional protein HisB (361 aa).

Positions 1 to 172 are histidinol-phosphatase; that stretch reads MSQPTLFIDR…PKTTACERPP (172 aa). D9 (nucleophile) is an active-site residue. 2 residues coordinate Mg(2+): D9 and D11. The active-site Proton donor is the D11. C92, H94, C100, and C102 together coordinate Zn(2+). Mg(2+) is bound at residue D129. An imidazoleglycerol-phosphate dehydratase region spans residues 173-361; that stretch reads RYAEVVRTTK…NELPSSKGVL (189 aa).

This sequence in the N-terminal section; belongs to the histidinol-phosphatase family. It in the C-terminal section; belongs to the imidazoleglycerol-phosphate dehydratase family. Mg(2+) serves as cofactor. Requires Zn(2+) as cofactor.

It is found in the cytoplasm. The catalysed reaction is D-erythro-1-(imidazol-4-yl)glycerol 3-phosphate = 3-(imidazol-4-yl)-2-oxopropyl phosphate + H2O. It catalyses the reaction L-histidinol phosphate + H2O = L-histidinol + phosphate. Its pathway is amino-acid biosynthesis; L-histidine biosynthesis; L-histidine from 5-phospho-alpha-D-ribose 1-diphosphate: step 6/9. The protein operates within amino-acid biosynthesis; L-histidine biosynthesis; L-histidine from 5-phospho-alpha-D-ribose 1-diphosphate: step 8/9. The chain is Histidine biosynthesis bifunctional protein HisB from Actinobacillus pleuropneumoniae serotype 7 (strain AP76).